We begin with the raw amino-acid sequence, 231 residues long: 7-cyano-7-deazaguanine synthase (231 aa).

8–18 is an ATP binding site; the sequence is FSGGQDSTTCL. The Zn(2+) site is built by Cys188, Cys197, Cys200, and Cys203.

It belongs to the QueC family. The cofactor is Zn(2+).

The enzyme catalyses 7-carboxy-7-deazaguanine + NH4(+) + ATP = 7-cyano-7-deazaguanine + ADP + phosphate + H2O + H(+). The protein operates within purine metabolism; 7-cyano-7-deazaguanine biosynthesis. Functionally, catalyzes the ATP-dependent conversion of 7-carboxy-7-deazaguanine (CDG) to 7-cyano-7-deazaguanine (preQ(0)). The chain is 7-cyano-7-deazaguanine synthase from Escherichia coli O127:H6 (strain E2348/69 / EPEC).